The primary structure comprises 293 residues: Elongation factor P--(R)-beta-lysine ligase homolog (293 aa).

ATP-binding positions include 86–88 (RNN), 223–224 (EL), and glycine 272.

This sequence belongs to the class-II aminoacyl-tRNA synthetase family. EpmA subfamily. Homodimer.

The chain is Elongation factor P--(R)-beta-lysine ligase homolog (genX) from Aquifex aeolicus (strain VF5).